The primary structure comprises 1998 residues: Receptor-type tyrosine-protein phosphatase beta (1998 aa).

Residues 1-22 (MLRHGALTALWITLSVVQTGVA) form the signal peptide. 17 Fibronectin type-III domains span residues 23–109 (EQVK…VLQT), 113–206 (PPAR…VPSP), 207–291 (VKDL…TAPM), 292–384 (EVSN…VRNL), 378–466 (PEKV…QGRT), 470–556 (AVLQ…TVPA), 557–642 (QVTD…EGRT), 643–733 (VPSS…TVPD), 734–821 (KVQG…TIPE), 822–913 (PVKD…TVKN), 908–994 (PSTV…LGQT), 995–1088 (VPAS…VPAA), 1086–1173 (PAAV…GRTV), 1176–1263 (AVNH…TAPS), 1264–1357 (PPSL…TKPD), 1358–1449 (KIQN…IDRP), and 1449–1551 (PPQP…KLGA). Residues 23-1622 (EQVKCNFTLL…ESEPLFGVIE (1600 aa)) lie on the Extracellular side of the membrane. Residues N28, N53, N75, N173, N199, and N268 are each glycosylated (N-linked (GlcNAc...) asparagine). N-linked (GlcNAc...) asparagine glycosylation is found at N415, N422, N480, N575, N599, and N653. An N-linked (GlcNAc...) asparagine glycan is attached at N830. N-linked (GlcNAc...) asparagine glycosylation is found at N1041, N1097, N1164, N1186, N1213, N1275, N1368, N1471, N1475, and N1519. A helical transmembrane segment spans residues 1623-1643 (GVSAGLFLIGMLVALVAFFIC). The Cytoplasmic portion of the chain corresponds to 1644–1997 (RQKASHSRER…EYHRDAIYSR (354 aa)). The region spanning 1704-1964 (LSKEYEDLKD…VYLHQCVRDV (261 aa)) is the Tyrosine-protein phosphatase domain. Substrate is bound by residues D1871, 1905–1911 (CSAGVGR), and Q1949. C1905 serves as the catalytic Phosphocysteine intermediate. Y1982 bears the Phosphotyrosine mark.

It belongs to the protein-tyrosine phosphatase family. Receptor class 3 subfamily. Monomer. Interacts with TEK. Interacts via fibronectin type-III 17 domain with CDH5. Detected in a complex with CNTN1 and NRCAM. Interacts (phosphorylated form) with FYN and GRB2. Interacts with IGFBP2. In terms of tissue distribution, expression is very high in the vasculature of lung, spleen, and kidney, as well as in the heart valves, and is also present in the endothelium of arterioles and venules. Also expressed in tumor vasculature.

It is found in the membrane. It catalyses the reaction O-phospho-L-tyrosyl-[protein] + H2O = L-tyrosyl-[protein] + phosphate. Functionally, plays an important role in blood vessel remodeling and angiogenesis. Not necessary for the initial formation of blood vessels, but is essential for their maintenance and remodeling. Can induce dephosphorylation of TEK/TIE2, CDH5/VE-cadherin and KDR/VEGFR-2. Regulates angiopoietin-TIE2 signaling in endothelial cells. Acts as a negative regulator of TIE2, and controls TIE2 driven endothelial cell proliferation, which in turn affects blood vessel remodeling during embryonic development and determines blood vessel size during perinatal growth. Essential for the maintenance of endothelial cell contact integrity and for the adhesive function of VE-cadherin in endothelial cells and this requires the presence of plakoglobin. The protein is Receptor-type tyrosine-protein phosphatase beta (Ptprb) of Mus musculus (Mouse).